We begin with the raw amino-acid sequence, 299 residues long: Recombination-associated protein RdgC (299 aa).

It belongs to the RdgC family.

The protein resides in the cytoplasm. Its subcellular location is the nucleoid. Functionally, may be involved in recombination. This chain is Recombination-associated protein RdgC, found in Cupriavidus necator (strain ATCC 17699 / DSM 428 / KCTC 22496 / NCIMB 10442 / H16 / Stanier 337) (Ralstonia eutropha).